A 207-amino-acid polypeptide reads, in one-letter code: Ras-related protein Rab-8A (207 aa).

GTP is bound by residues serine 17, glycine 18, valine 19, glycine 20, lysine 21, threonine 22, cysteine 23, serine 35, serine 39, and threonine 40. Threonine 22 is a Mg(2+) binding site. Short sequence motifs (switch) lie at residues 31-45 (DAFN…GIDF) and 63-80 (DTAG…YYRG). The Mg(2+) site is built by threonine 40 and aspartate 63. Position 66 (glycine 66) interacts with GTP. Residue threonine 72 is modified to Phosphothreonine. 5 residues coordinate GTP: asparagine 121, lysine 122, aspartate 124, alanine 152, and lysine 153. Phosphoserine occurs at positions 181 and 185. Position 204 is a cysteine methyl ester (cysteine 204). A lipid anchor (S-geranylgeranyl cysteine) is attached at cysteine 204. Positions 205–207 (VLL) are cleaved as a propeptide — removed in mature form.

Belongs to the small GTPase superfamily. Rab family. Interacts (GTP-bound form) with MICALL1; regulates RAB8A association with recycling endosomes. Interacts with MICALL2; competes with RAB13 and is involved in E-cadherin endocytic recycling. Interacts (GTP-bound form) with MICAL1, MICALCL, MICAL3, EHBP1 and EHBP1L1; at least in case of MICAL1, MICALCL, MICAL3 and EHBP1L1 two molecules of RAB8A can bind to one molecule of the effector protein; ternary complexes of RAB8A, RAB13 and either MICAL1 or EHBP1L1 are possible. Interacts with EHD1. Interacts with MAP4K2 and SYTL4. Interacts with SGSM1 and SGSM3. Interacts with RABIF, RIMS2, RPH3A and RPH3A. Interacts with OPTN. Interacts with RAB3IP, RAB3IP functions as guanine exchange factor (GEF). Interacts with MYO5B. Interacts with CIMAP3. Interacts with BIRC6/bruce. Interacts with OCRL. Interacts with AHI1. Interacts with DCDC1. Interacts with LRRK2; interaction facilitates phosphorylation of Thr-72. Interacts with RAB31P, GDI1, GDI2, CHM, CHML, RABGGTA, RABGGTB, TBC1D15 and INPP5B; these interactions are dependent on Thr-72 not being phosphorylated. Interacts with RILPL1 and RILPL2; these interactions are dependent on the phosphorylation of Thr-72 by LRRK2. Interacts with DZIP1; prevents inhibition by the GDP-dissociation inhibitor GDI2. Interacts (in GDP-bound form) with RAB3IP/Rabin8, RAB3IP functions as guanine exchange factor (GEF) towards RAB8A. Interacts (in GDP-bound form) with RPGR, RPGR functions as GEF towards RAB8A. It depends on Mg(2+) as a cofactor. Phosphorylation of Thr-72 in the switch II region by LRRK2 prevents the association of RAB regulatory proteins, including CHM, CHML and RAB GDP dissociation inhibitors GDI1 and GDI2. Phosphorylation by LRRK2 is required for localization to stressed lysosomes.

Its subcellular location is the cell membrane. It localises to the golgi apparatus. The protein resides in the endosome membrane. The protein localises to the recycling endosome membrane. It is found in the cell projection. Its subcellular location is the cilium. It localises to the cytoplasmic vesicle. The protein resides in the phagosome membrane. The protein localises to the cytoplasm. It is found in the cytoskeleton. Its subcellular location is the microtubule organizing center. It localises to the centrosome. The protein resides in the centriole. The protein localises to the cilium basal body. It is found in the midbody. Its subcellular location is the lysosome. It carries out the reaction GTP + H2O = GDP + phosphate + H(+). With respect to regulation, regulated by guanine nucleotide exchange factors (GEFs) such as RAB3IP/Rabin8 and RPGR which promote the exchange of bound GDP for free GTP, GTPase activating proteins (GAPs) which increase the GTP hydrolysis activity, and GDP dissociation inhibitors (GDIs) which inhibit the dissociation of the nucleotide from the GTPase. Activated in response to insulin. In terms of biological role, the small GTPases Rab are key regulators of intracellular membrane trafficking, from the formation of transport vesicles to their fusion with membranes. Rabs cycle between an inactive GDP-bound form and an active GTP-bound form that is able to recruit to membranes different sets of downstream effectors directly responsible for vesicle formation, movement, tethering and fusion. RAB8A is involved in polarized vesicular trafficking and neurotransmitter release. Together with RAB11A, RAB3IP, the exocyst complex, PARD3, PRKCI, ANXA2, CDC42 and DNMBP promotes transcytosis of PODXL to the apical membrane initiation sites (AMIS), apical surface formation and lumenogenesis. Regulates the compacted morphology of the Golgi. Together with MYO5B and RAB11A participates in epithelial cell polarization. Also involved in membrane trafficking to the cilium and ciliogenesis. Together with MICALL2, may also regulate adherens junction assembly. May play a role in insulin-induced transport to the plasma membrane of the glucose transporter GLUT4 and therefore play a role in glucose homeostasis. Involved in autophagy. Participates in the export of a subset of neosynthesized proteins through a Rab8-Rab10-Rab11-dependent endososomal export route. Targeted to and stabilized on stressed lysosomes through LRRK2 phosphorylation. Suppresses stress-induced lysosomal enlargement through EHBP1 and EHNP1L1 effector proteins. This Bos taurus (Bovine) protein is Ras-related protein Rab-8A (RAB8A).